The following is a 453-amino-acid chain: UDP-N-acetylmuramoylalanine--D-glutamate ligase (453 aa).

117–123 provides a ligand contact to ATP; it reads GTNGKTT.

The protein belongs to the MurCDEF family.

The protein resides in the cytoplasm. The catalysed reaction is UDP-N-acetyl-alpha-D-muramoyl-L-alanine + D-glutamate + ATP = UDP-N-acetyl-alpha-D-muramoyl-L-alanyl-D-glutamate + ADP + phosphate + H(+). It functions in the pathway cell wall biogenesis; peptidoglycan biosynthesis. Its function is as follows. Cell wall formation. Catalyzes the addition of glutamate to the nucleotide precursor UDP-N-acetylmuramoyl-L-alanine (UMA). In Caldicellulosiruptor saccharolyticus (strain ATCC 43494 / DSM 8903 / Tp8T 6331), this protein is UDP-N-acetylmuramoylalanine--D-glutamate ligase.